Consider the following 101-residue polypeptide: Small ribosomal subunit protein uS14 (101 aa).

It belongs to the universal ribosomal protein uS14 family. In terms of assembly, part of the 30S ribosomal subunit. Contacts proteins S3 and S10.

Functionally, binds 16S rRNA, required for the assembly of 30S particles and may also be responsible for determining the conformation of the 16S rRNA at the A site. In Novosphingobium aromaticivorans (strain ATCC 700278 / DSM 12444 / CCUG 56034 / CIP 105152 / NBRC 16084 / F199), this protein is Small ribosomal subunit protein uS14.